A 298-amino-acid polypeptide reads, in one-letter code: Foldase protein PrsA 1 (298 aa).

The first 19 residues, 1-19 (MKKWLIALAGVLLTFTLAG), serve as a signal peptide directing secretion. C20 carries N-palmitoyl cysteine lipidation. A lipid anchor (S-diacylglycerol cysteine) is attached at C20. The PpiC domain occupies 136-232 (EPKVTVQHIL…NGYEIIRMIK (97 aa)).

Belongs to the PrsA family.

Its subcellular location is the cell membrane. The enzyme catalyses [protein]-peptidylproline (omega=180) = [protein]-peptidylproline (omega=0). Plays a major role in protein secretion by helping the post-translocational extracellular folding of several secreted proteins. This is Foldase protein PrsA 1 (prsA1) from Lactiplantibacillus plantarum (strain ATCC BAA-793 / NCIMB 8826 / WCFS1) (Lactobacillus plantarum).